The primary structure comprises 530 residues: TNF receptor-associated factor 6 (530 aa).

The interval 1–362 (MSLLNCENSC…EAQQCNGIYI (362 aa)) is interaction with TAX1BP1. The RING-type zinc-finger motif lies at 70 to 109 (CPICLMALREAVQTPCGHRFCKACIIKSIRDAGHKCPVDN). Residue lysine 124 forms a Glycyl lysine isopeptide (Lys-Gly) (interchain with G-Cter in SUMO); alternate linkage. Residue lysine 124 forms a Glycyl lysine isopeptide (Lys-Gly) (interchain with G-Cter in ubiquitin); alternate linkage. A Glycyl lysine isopeptide (Lys-Gly) (interchain with G-Cter in SUMO) cross-link involves residue lysine 142. 2 consecutive TRAF-type zinc fingers follow at residues 150-202 (DHQV…EEKE) and 203-259 (IHDQ…NHLA). The stretch at 299–356 (EDPNYEETIKQLESRLVRQDHQIRELTAKMETQSMYVGELKRTIRTLEDKVAEMEAQQ) forms a coiled coil. Lysine 327 is covalently cross-linked (Glycyl lysine isopeptide (Lys-Gly) (interchain with G-Cter in ubiquitin)). The MATH domain maps to 358–507 (NGIYIWKIGN…DDTLLVRCEV (150 aa)). The interaction with TANK stretch occupies residues 363–530 (WKIGNFGMHL…FQPRSTDAGV (168 aa)). Lysine 461 participates in a covalent cross-link: Glycyl lysine isopeptide (Lys-Gly) (interchain with G-Cter in SUMO).

This sequence belongs to the TNF receptor-associated factor family. A subfamily. Homotrimer. Homooligomer. N-terminal region is dimeric while C-terminal region is trimeric; maybe providing a mode of oligomerization. Upon IL1B treatment, forms a complex with PELI1, IRAK1, IRAK4 and MYD88; this complex recruits MAP3K7/TAK1, TAB1 and TAB2 to mediate NF-kappa-B activation. Direct binding of SMAD6 to PELI1 prevents the complex formation and hence negatively regulates IL1R-TLR signaling and eventually NF-kappa-B-mediated gene expression. Binds to TNFRSF5/CD40 and TNFRSF11A/RANK. Associates with NGFR, TNFRSF17, IRAK2, IRAK3, PELI2, PELI3, RIPK2, MAP3K1, MAP3K5, MAP3K14, CSK, TRAF, TRAF-interacting protein TRIP and TNF receptor associated protein TDP2. Binds UBE2V1. Interacts with MAVS/IPS1. Interacts with TAX1BP1; this interaction mediates deubiquitination of TRAF6 and inhibition of NF-kappa-B activation. Interacts with IL17R. Interacts with SQSTM1 bridging NTRK1 and NGFR. Forms a ternary complex with SQSTM1 and PRKCZ. Interacts with IL1RL1. Interacts with AJUBA. Interacts with TRAFD1. Interacts with TICAM2. Interacts with ZFAND5. Interacts with ARRB1 and ARRB2. Interacts with MAP3K7 and TAB1/MAP3K7IP1; during IL-1 signaling. Interacts with UBE2N. Interacts with TGFBR1, HDAC1 and RANGAP1. Interacts with AKT1, AKT2 and AKT3. Interacts (via TRAF domains) with NUMBL (via C-terminal). Interacts (via TRAF domains) with DYNC2I2 (via WD domains). Interacts with RBCK1. Interacts with LIMD1 (via LIM domains). Interacts with RSAD2/viperin. Interacts with IFIT3 (via N-terminus). Interacts (via C-terminus) with EIF2AK2/PKR (via the kinase catalytic domain). Interacts with CARD14. Interacts with CD40 and MAP3K8; the interaction is required for ERK activation. Interacts with TICAM1 and this interaction is enhanced in the presence of WDFY1. Interacts with TANK; this interaction increases in response to DNA damage. Interacts with USP10; this interaction increases in response to DNA damage. Interacts with ZC3H12A; this interaction increases in response to DNA damage and is stimulated by TANK. Interacts with WDFY3. Interacts with TRIM13. Interacts with GPS2. Interacts (via C-terminus) with SASH1. Interacts with LRRC19. Interacts with IL17RA and TRAF3IP2. Interacts with TOMM70. Interacts with AMBRA1; interaction is required to mediate 'Lys-63'-linked ubiquitination of ULK1. Interacts with CRBN; this interaction inhibits TLR4-mediated signaling by preventing TRAF6-mediated ubiquitination of ECSIT. In terms of assembly, (Microbial infection) Interacts (via N-terminal RING domain) with Toxoplasma gondii GRA7; the interaction plays a role in GRA7-induced pro-inflammatory cytokine production in mouse macrophages. In terms of processing, sumoylated on Lys-124, Lys-142 and Lys-461 with SUMO1. Post-translationally, polyubiquitinated on Lys-124 by TRAF3IP2; after cell stimulation with IL17A. Polyubiquitinated; after cell stimulation with IL1B or TGFB. This ligand-induced cell stimulation leads to dimerization/oligomerization of TRAF6 molecules, followed by auto-ubiquitination which involves UBE2N and UBE2V1 and leads to TRAF6 activation. This 'Lys-63' site-specific poly-ubiquitination appears to be associated with the activation of signaling molecules. Endogenous autoubiquitination occurs only for the cytoplasmic form. Deubiquitinated by USP10 in a TANK-dependent manner, leading to the negative regulation of NF-kappa-B signaling upon DNA damage. LRRC19 induces 'Lys-63' ubiquitination. Ubiquitinated at Lys-327 by the SCF(FBXL2) complex, leading to its degradation by the proteasome. Highly expressed in brain, lung, liver, skeletal muscle, and kidney; lower expression in heart, spleen, and testis.

It is found in the cytoplasm. The protein localises to the cell cortex. Its subcellular location is the nucleus. It localises to the lipid droplet. It carries out the reaction S-ubiquitinyl-[E2 ubiquitin-conjugating enzyme]-L-cysteine + [acceptor protein]-L-lysine = [E2 ubiquitin-conjugating enzyme]-L-cysteine + N(6)-ubiquitinyl-[acceptor protein]-L-lysine.. Its pathway is protein modification; protein ubiquitination. Functionally, E3 ubiquitin ligase that, together with UBE2N and UBE2V1, mediates the synthesis of 'Lys-63'-linked-polyubiquitin chains conjugated to proteins, such as ECSIT, IKBKG, IRAK1, AKT1 and AKT2. Also mediates ubiquitination of free/unanchored polyubiquitin chain that leads to MAP3K7 activation. Leads to the activation of NF-kappa-B and JUN. Seems to also play a role in dendritic cells (DCs) maturation and/or activation. Represses c-Myb-mediated transactivation, in B-lymphocytes. Adapter protein that seems to play a role in signal transduction initiated via TNF receptor, IL-1 receptor and IL-17 receptor. Regulates osteoclast differentiation by mediating the activation of adapter protein complex 1 (AP-1) and NF-kappa-B, in response to RANK-L stimulation. Together with MAP3K8, mediates CD40 signals that activate ERK in B-cells and macrophages, and thus may play a role in the regulation of immunoglobulin production. Acts as a regulator of the JNK and NF-kappa-B signaling pathways by initiating assembly of heterotypic 'Lys-63'-/'Lys-48'-linked branched ubiquitin chains that are then recognized by TAB2: TRAF6 catalyzes initial 'Lys-63'-linked-polyubiquitin chains that are then branched via 'Lys-48'-linked polyubiquitin by HUWE1. 'Lys-63'-/'Lys-48'-linked branched ubiquitin chains protect 'Lys-63'-linkages from CYLD deubiquitination. Also participates in the TCR signaling by ubiquitinating LAT. This is TNF receptor-associated factor 6 (Traf6) from Mus musculus (Mouse).